The following is a 283-amino-acid chain: Mitochondrial intermembrane space import and assembly protein 40 (283 aa).

Residues 1 to 35 (MFRPASRALLRAPTPAVGVARGPTRRFISSSTGST) constitute a mitochondrion transit peptide. Residues 36–46 (KPRSWKNTFIR) lie on the Mitochondrial matrix side of the membrane. Residues 47-64 (VGLASGAVYYYNTSSVFA) traverse the membrane as a helical; Signal-anchor for type II membrane protein segment. At 65–283 (ETPSLSFRPE…EKTPEQQTEK (219 aa)) the chain is on the mitochondrial intermembrane side. The interval 72 to 136 (RPEAQPKHED…SAEELEAEAD (65 aa)) is disordered. A compositionally biased stretch (basic and acidic residues) spans 91–101 (IKPKSREEKKA). The segment covering 102–119 (PAAAADAAATPASTGANA) has biased composition (low complexity). 3 disulfide bridges follow: Cys152/Cys154, Cys163/Cys196, and Cys173/Cys186. The 45-residue stretch at 160–204 (YGPCGEEFRAAFSCFVYSEEEPKGMDCIDKFKAMQDCFRAHPDVY) folds into the CHCH domain. Short sequence motifs (cx9C motif) lie at residues 163-173 (CGEEFRAAFSC) and 186-196 (CIDKFKAMQDC). The tract at residues 211–283 (DEEAGAEANA…EKTPEQQTEK (73 aa)) is disordered. Basic and acidic residues-rich tracts occupy residues 237–251 (VEKH…DEVK) and 272–283 (EQEKTPEQQTEK).

Monomer. It depends on Cu(2+) as a cofactor. The cofactor is Zn(2+).

Its subcellular location is the mitochondrion inner membrane. Functionally, required for the import and folding of small cysteine-containing proteins (small Tim) in the mitochondrial intermembrane space (IMS). Forms a redox cycle with ERV1 that involves a disulfide relay system. Precursor proteins to be imported into the IMS are translocated in their reduced form into the mitochondria. The oxidized form of MIA40 forms a transient intermolecular disulfide bridge with the reduced precursor protein, resulting in oxidation of the precursor protein that now contains an intramolecular disulfide bond and is able to undergo folding in the IMS. The protein is Mitochondrial intermembrane space import and assembly protein 40 (mia40) of Emericella nidulans (strain FGSC A4 / ATCC 38163 / CBS 112.46 / NRRL 194 / M139) (Aspergillus nidulans).